The primary structure comprises 475 residues: Sulfate adenylyltransferase subunit 1 (475 aa).

In terms of domain architecture, tr-type G spans 25–239 (KSLLRFLTCG…EVLETVEIQR (215 aa)). The tract at residues 34-41 (GSVDDGKS) is G1. A GTP-binding site is contributed by 34–41 (GSVDDGKS). The interval 92–96 (GITID) is G2. The interval 113-116 (DTPG) is G3. GTP is bound by residues 113–117 (DTPGH) and 168–171 (NKMD). The tract at residues 168–171 (NKMD) is G4. The segment at 206–208 (SAL) is G5.

Belongs to the TRAFAC class translation factor GTPase superfamily. Classic translation factor GTPase family. CysN/NodQ subfamily. Heterodimer composed of CysD, the smaller subunit, and CysN.

The catalysed reaction is sulfate + ATP + H(+) = adenosine 5'-phosphosulfate + diphosphate. Its pathway is sulfur metabolism; hydrogen sulfide biosynthesis; sulfite from sulfate: step 1/3. With CysD forms the ATP sulfurylase (ATPS) that catalyzes the adenylation of sulfate producing adenosine 5'-phosphosulfate (APS) and diphosphate, the first enzymatic step in sulfur assimilation pathway. APS synthesis involves the formation of a high-energy phosphoric-sulfuric acid anhydride bond driven by GTP hydrolysis by CysN coupled to ATP hydrolysis by CysD. This chain is Sulfate adenylyltransferase subunit 1, found in Shigella flexneri.